A 384-amino-acid chain; its full sequence is MAKHLFTSESVSEGHPDKIADQISDAVLDAILEQDPKARVACETYVKTGMVMVGGEVTTSAWVDIEEITRETVREIGYVHSDMGFDANSCAVLNTIGKQSPDINQGVDKEDPKEQGAGDQGIMFGYATNETPILMPAPITYAHLLVKQQAEVRKSGKLDFLRPDAKSQVTFQYDQGKIVGIDAVVLSTQHSDSVTTADLREAVMEEIIKPVLPAEWLSKETKFFINPTGRFVIGGPMGDCGLTGRKIIVDTYGGAARHGGGAFSGKDPSKVDRSAAYAARYVAKNIVAAGMADRCEIQLSYAIGVADPTSIMIETFGTEKVSHDIIIESVRQHFDLRPYGLQEMLNLLQPIYKKTAAYGHFGREEFPWEATDKAEILRDFAGIK.

An ATP-binding site is contributed by H15. A Mg(2+)-binding site is contributed by D17. E43 contributes to the K(+) binding site. L-methionine is bound by residues E56 and Q99. The segment at 99 to 109 (QSPDINQGVDK) is flexible loop. ATP-binding positions include 164 to 166 (DAK), 230 to 231 (RF), D239, 245 to 246 (RK), A262, and K266. D239 is an L-methionine binding site. An L-methionine-binding site is contributed by K270.

Belongs to the AdoMet synthase family. Homotetramer; dimer of dimers. Mg(2+) is required as a cofactor. K(+) serves as cofactor.

Its subcellular location is the cytoplasm. It carries out the reaction L-methionine + ATP + H2O = S-adenosyl-L-methionine + phosphate + diphosphate. It functions in the pathway amino-acid biosynthesis; S-adenosyl-L-methionine biosynthesis; S-adenosyl-L-methionine from L-methionine: step 1/1. Its function is as follows. Catalyzes the formation of S-adenosylmethionine (AdoMet) from methionine and ATP. The overall synthetic reaction is composed of two sequential steps, AdoMet formation and the subsequent tripolyphosphate hydrolysis which occurs prior to release of AdoMet from the enzyme. In Aliivibrio salmonicida (strain LFI1238) (Vibrio salmonicida (strain LFI1238)), this protein is S-adenosylmethionine synthase.